The primary structure comprises 1001 residues: Copper-transporting ATPase RAN1 (1001 aa).

The interval 1–21 is disordered; it reads MAPSRRDLQLTPVTGGSSSQI. At 1–298 the chain is on the cytoplasmic side; that stretch reads MAPSRRDLQL…TGEASNMFRR (298 aa). Residues 11–21 show a composition bias toward polar residues; that stretch reads TPVTGGSSSQI. 2 HMA domains span residues 56–122 and 133–199; these read RKIQ…FEAE and LVGQ…FEGS. Cys67, Cys70, Cys144, and Cys147 together coordinate Cu(+). The 67-residue stretch at 207 to 273 folds into the HMA 3; degenerate domain; the sequence is DKLVLRVDGI…GIEEDGFGKF (67 aa). A helical membrane pass occupies residues 299-320; the sequence is FISSLVLSIPLFFIQVICPHIA. Residues 321 to 338 are Extracellular-facing; the sequence is LFDALLVWRCGPFMMGDW. Residues 339 to 358 traverse the membrane as a helical segment; that stretch reads LKWALVSVIQFVIGKRFYVA. Residues 359-365 are Cytoplasmic-facing; that stretch reads AWRALRN. A helical membrane pass occupies residues 366–386; sequence GSTNMDVLVALGTSASYFYSV. Residues 387–403 lie on the Extracellular side of the membrane; it reads GALLYGAVTGFWSPTYF. Residues 404-424 form a helical membrane-spanning segment; that stretch reads DASAMLITFVLLGKYLESLAK. The Cytoplasmic portion of the chain corresponds to 425–558; it reads GKTSDAMKKL…KAPIQKFADY (134 aa). A helical transmembrane segment spans residues 559–581; that stretch reads VASIFVPVVITLALFTLVGWSIG. Over 582-602 the chain is Extracellular; that stretch reads GAVGAYPDEWLPENGTHFVFS. A helical transmembrane segment spans residues 603–620; it reads LMFSISVVVIACPCALGL. Residues 621–931 are Cytoplasmic-facing; the sequence is ATPTAVMVAT…DLSRKTLTRI (311 aa). The active-site 4-aspartylphosphate intermediate is the Asp658. Positions 877 and 881 each coordinate Mg(2+). The helical transmembrane segment at 932-951 threads the bilayer; it reads RLNYVFAMAYNVVSIPIAAG. Residues 952–963 lie on the Extracellular side of the membrane; sequence VFFPVLRVQLPP. Residues 964-982 form a helical membrane-spanning segment; sequence WAAGACMALSSVSVVCSSL. Residues 983–1001 are Cytoplasmic-facing; that stretch reads LLRRYKKPRLTTVLKITTE.

Belongs to the cation transport ATPase (P-type) (TC 3.A.3) family. Type IB subfamily.

The protein localises to the membrane. It carries out the reaction Cu(+)(in) + ATP + H2O = Cu(+)(out) + ADP + phosphate + H(+). Functionally, involved in copper import into the cell. Essential for ethylene signaling, which requires copper. Acts by delivering copper to create functional hormone receptors. This chain is Copper-transporting ATPase RAN1 (RAN1), found in Arabidopsis thaliana (Mouse-ear cress).